The chain runs to 552 residues: Acyl-CoA synthetase FUM10 (552 aa).

Residue 183–194 (ELFTSGTTGAPK) participates in AMP binding. The segment at 463–536 (EIEHVARLHD…QEIPYNRTGK (74 aa)) is AMP-binding.

The protein belongs to the ATP-dependent AMP-binding enzyme family.

It functions in the pathway mycotoxin biosynthesis. Its function is as follows. Acyl-CoA synthetase; part of the gene cluster that mediates the biosynthesis of fumonisins B1 (FB1), B2 (FB2), B3 (FB3), and B4 (FB4), which are carcinogenic mycotoxins. Within the pathway, FUM10 is involved the addition of the tricarballylic moieties to the carbon backbone. FUM10 catalyzes the CoA activation of citrate to form tricarballylic acid. The biosynthesis starts with the FUM1-catalyzed carbon chain assembly from one molecule of acetyl-CoA, eight molecules of malonyl-CoA, and two molecules of methionine (in S-adenosyl form). The C18 polyketide chain is released from the enzyme by a nucleophilic attack of a carbanion, which is derived from R-carbon of alanine by decarboxylation, on the carbonyl carbon of polyketide acyl chain. This step is catalyzed by the pyridoxal 5'-phosphate-dependent aminoacyl transferase FUM8. The resultant 3-keto intermediate is then stereospecifically reduced to a 3-hydroxyl product by reductase FUM13. Subsequent oxidations at C-10 by the cytochrome P450 monooxygenase FUM2, C-14 and C-15 by FUM6, FUM12 or FUM15, tricarballylic esterification of the hydroxyl groups on C-14 and C-15 by acyltransferase FUM14, and C-5 hydroxylation by 2-keto-glutarate-dependent dioxygenase FUM3 furnish the biosynthesis of fumonisins. The tricarballylic moieties are most likely derived from the citric acid cycle, and their addition to the carbon backbone may involve FUM7, FUM10, FUM11 and FUM14. The sequence is that of Acyl-CoA synthetase FUM10 from Gibberella moniliformis (strain M3125 / FGSC 7600) (Maize ear and stalk rot fungus).